A 212-amino-acid polypeptide reads, in one-letter code: Octanoyltransferase (212 aa).

The BPL/LPL catalytic domain occupies 30 to 205; it reads ETTVDELWCL…ELVEGLGHSQ (176 aa). Residues 69–76, 136–138, and 149–151 each bind substrate; these read RGGQVTYH, SLG, and GLA. The Acyl-thioester intermediate role is filled by cysteine 167.

The protein belongs to the LipB family.

The protein localises to the cytoplasm. It carries out the reaction octanoyl-[ACP] + L-lysyl-[protein] = N(6)-octanoyl-L-lysyl-[protein] + holo-[ACP] + H(+). Its pathway is protein modification; protein lipoylation via endogenous pathway; protein N(6)-(lipoyl)lysine from octanoyl-[acyl-carrier-protein]: step 1/2. Functionally, catalyzes the transfer of endogenously produced octanoic acid from octanoyl-acyl-carrier-protein onto the lipoyl domains of lipoate-dependent enzymes. Lipoyl-ACP can also act as a substrate although octanoyl-ACP is likely to be the physiological substrate. The chain is Octanoyltransferase from Marinobacter nauticus (strain ATCC 700491 / DSM 11845 / VT8) (Marinobacter aquaeolei).